Here is a 314-residue protein sequence, read N- to C-terminus: 2-desacetyl-2-hydroxyethyl bacteriochlorophyllide A dehydrogenase (314 aa).

The protein operates within porphyrin-containing compound metabolism; bacteriochlorophyll biosynthesis (light-independent). This protein catalyzes the penultimate step in bacteriochlorophyll a biosynthesis. The protein is 2-desacetyl-2-hydroxyethyl bacteriochlorophyllide A dehydrogenase (bchC) of Rhodobacter capsulatus (strain ATCC BAA-309 / NBRC 16581 / SB1003).